The following is a 1363-amino-acid chain: DNA-directed RNA polymerase subunit beta' (1363 aa).

Residues 1–39 form a disordered region; it reads MTSTPSKSRKSSKGSKAAKAAASAPETRPLAKTPPPFRN. Low complexity predominate over residues 14 to 24; sequence GSKAAKAAASA. Zn(2+) is bound by residues C248, C315, C322, and C325.

This sequence belongs to the RNA polymerase beta' chain family. RpoC2 subfamily. In terms of assembly, in cyanobacteria the RNAP catalytic core is composed of 2 alpha, 1 beta, 1 beta', 1 gamma and 1 omega subunit. When a sigma factor is associated with the core the holoenzyme is formed, which can initiate transcription. Zn(2+) is required as a cofactor.

The enzyme catalyses RNA(n) + a ribonucleoside 5'-triphosphate = RNA(n+1) + diphosphate. Functionally, DNA-dependent RNA polymerase catalyzes the transcription of DNA into RNA using the four ribonucleoside triphosphates as substrates. This is DNA-directed RNA polymerase subunit beta' from Synechococcus sp. (strain WH7803).